The primary structure comprises 148 residues: Single-stranded DNA-binding protein 2 (148 aa).

The SSB domain occupies 6–108 (MNHITVSGLV…IEAESFGHDL (103 aa)).

In terms of assembly, homotetramer.

The chain is Single-stranded DNA-binding protein 2 (ssb2) from Tropheryma whipplei (strain TW08/27) (Whipple's bacillus).